We begin with the raw amino-acid sequence, 65 residues long: Light-harvesting protein B800/830/1020 beta-2 chain (65 aa).

Over 1–17 (TDIRTGLTDEECQEIHE) the chain is Cytoplasmic. H16 and N34 together coordinate a bacteriochlorophyll. A helical membrane pass occupies residues 18–40 (MNMLGMHAYWSIGLIANALAYAW). At 41–65 (RPFHQGRAGNRLEDHAPDYVRSALT) the chain is on the periplasmic side.

This sequence belongs to the antenna complex beta subunit family. The core complex is formed by different alpha and beta chains, binding bacteriochlorophyll molecules, and arranged most probably in tetrameric structures disposed around the reaction center. The non-pigmented gamma chains may constitute additional components.

It is found in the cell inner membrane. Antenna complexes are light-harvesting systems, which transfer the excitation energy to the reaction centers. This chain is Light-harvesting protein B800/830/1020 beta-2 chain, found in Halorhodospira halochloris (Ectothiorhodospira halochloris).